We begin with the raw amino-acid sequence, 1328 residues long: Peroxidasin homolog pxn-2 (1328 aa).

The signal sequence occupies residues 1–16; it reads MLLEFLLLIGISLSTA. Residues 17 to 45 enclose the LRRNT domain; sequence CPSECRCAGLDVHCEGKNLTAIPGHIPIA. The N-linked (GlcNAc...) asparagine glycan is linked to N34. LRR repeat units follow at residues 42-66, 67-90, 92-114, 116-137, 138-161, and 164-191; these read IPIA…NFQA, LPNL…LLDS, PGLK…STAP, ALVS…LVSH, SPYM…FFNS, and VPTL…QFAD. N77 carries an N-linked (GlcNAc...) asparagine glycan. N220 carries an N-linked (GlcNAc...) asparagine glycan. The segment at 305-332 is disordered; that stretch reads KKMQASSSTEPPITTTTMEPMTTSTMDS. Low complexity predominate over residues 310–332; the sequence is SSSTEPPITTTTMEPMTTSTMDS. Ig-like C2-type domains follow at residues 346–438 and 445–532; these read PEID…FSVS and PVII…ANLL. The cysteines at positions 373 and 422 are disulfide-linked. N403 and N455 each carry an N-linked (GlcNAc...) asparagine glycan. C466 and C516 are disulfide-bonded. A glycan (N-linked (GlcNAc...) asparagine) is linked at N630. Residues C660 and C676 are joined by a disulfide bond. Position 754 (D754) interacts with heme b. H755 serves as the catalytic Proton acceptor. D756 provides a ligand contact to Ca(2+). Cystine bridges form between C775-C785 and C779-C807. N776 is a glycosylation site (N-linked (GlcNAc...) asparagine). T839, Y841, D843, and S845 together coordinate Ca(2+). The N-linked (GlcNAc...) asparagine glycan is linked to N894. Positions 913 and 1008 each coordinate heme b. The stretch at 1085-1109 is one LRR 7 repeat; the sequence is ALDLAALNIQRGRDHGLPSWTEYRK. 2 disulfides stabilise this stretch: C1111-C1168 and C1209-C1236. N1112 and N1128 each carry an N-linked (GlcNAc...) asparagine glycan. One copy of the LRR 8 repeat lies at 1204-1225; the sequence is LSKIICTNGDDIDRIQRDIFVY. N-linked (GlcNAc...) asparagine glycosylation occurs at N1228. Residues 1266–1297 form a disordered region; it reads IGGDEKAKRRKRRHHHSKKSCHDKGKRRKSGD. Over residues 1273–1295 the composition is skewed to basic residues; sequence KRRKRRHHHSKKSCHDKGKRRKS. N1300 is a glycosylation site (N-linked (GlcNAc...) asparagine).

The protein belongs to the peroxidase family. XPO subfamily. The cofactor is Ca(2+). Requires heme b as cofactor. In terms of tissue distribution, expressed in vulval muscles and in some neurons including PVQ. Expressed in the hypodermis and in coelomocytes.

Its subcellular location is the secreted. It is found in the extracellular space. It localises to the extracellular matrix. The protein resides in the basement membrane. It carries out the reaction L-lysyl-[collagen] + L-methionyl-[collagen] + H2O2 = [collagen]-L-lysyl-N-S-L-methionyl-[collagen] + 2 H2O + H(+). It catalyses the reaction bromide + H2O2 = hypobromite + H2O. The enzyme catalyses L-lysyl-[collagen] + L-methionyl-[collagen] + hypobromite = [collagen]-L-lysyl-N-S-L-methionyl-[collagen] + bromide + H2O + H(+). The catalysed reaction is L-tyrosyl-[protein] + bromide + H2O2 + H(+) = 3-bromo-L-tyrosyl-[protein] + 2 H2O. It carries out the reaction hypobromite + L-tyrosyl-[protein] + H(+) = 3-bromo-L-tyrosyl-[protein] + H2O. In terms of biological role, catalyzes the two-electron oxidation of bromide by hydrogen peroxide and generates hypobromite as a reactive intermediate which mediates the formation of sulfilimine cross-links between methionine and hydroxylysine residues within an uncross-linked collagen IV/COL4A1 NC1 hexamer. Required for embryonic morphogenesis playing a role in epidermal elongation at the twofold stage of embryonic development. Required post-embryonically for basement membrane integrity and muscle-epidermal attachments, and specifically in the function of basement membrane components such as the type IV collagens. May have a role in inhibiting axon regeneration. May functionally antagonize the peroxidasin pxn-1. The chain is Peroxidasin homolog pxn-2 from Caenorhabditis elegans.